The following is a 250-amino-acid chain: DNA repair protein RecO (250 aa).

Belongs to the RecO family.

Involved in DNA repair and RecF pathway recombination. The polypeptide is DNA repair protein RecO (Syntrophomonas wolfei subsp. wolfei (strain DSM 2245B / Goettingen)).